Consider the following 314-residue polypeptide: Ribosomal RNA small subunit methyltransferase H (314 aa).

S-adenosyl-L-methionine is bound by residues glycine 36–histidine 38, aspartate 56, phenylalanine 81, aspartate 103, and glutamine 110.

The protein belongs to the methyltransferase superfamily. RsmH family.

Its subcellular location is the cytoplasm. It catalyses the reaction cytidine(1402) in 16S rRNA + S-adenosyl-L-methionine = N(4)-methylcytidine(1402) in 16S rRNA + S-adenosyl-L-homocysteine + H(+). Functionally, specifically methylates the N4 position of cytidine in position 1402 (C1402) of 16S rRNA. The protein is Ribosomal RNA small subunit methyltransferase H of Shewanella sediminis (strain HAW-EB3).